A 524-amino-acid chain; its full sequence is Excitatory amino acid transporter 3 (524 aa).

Topologically, residues 1–18 are cytoplasmic; sequence MGKPARKGCEWKRFLKNN. Residues 19–38 form a helical membrane-spanning segment; that stretch reads WVLLSTVAAVVLGITTGVLV. Residues 39-61 are Extracellular-facing; it reads REHSNLSTLEKFYFAFPGEILMR. N-linked (GlcNAc...) asparagine glycosylation is present at N43. Residues 62-82 traverse the membrane as a helical segment; the sequence is MLKLIILPLIISSMITGVAAL. The Cytoplasmic segment spans residues 83–93; it reads DSNVSGKIGLR. The chain crosses the membrane as a helical span at residues 94–114; it reads AVVYYFCTTLIAVILGIVLVV. Na(+) contacts are provided by Y98, T101, and T102. Residues 115 to 205 are Extracellular-facing; the sequence is SIKPGVTQKV…KTKEYKIVGM (91 aa). N178 and N195 each carry an N-linked (GlcNAc...) asparagine glycan. A helical transmembrane segment spans residues 206–229; that stretch reads YSDGINVLGLIVFCLVFGLVIGKM. The Cytoplasmic segment spans residues 230–238; the sequence is GEKGQILVD. The chain crosses the membrane as a helical span at residues 239-266; sequence FFNALSDATMKIVQIIMCYMPLGILFLI. Topologically, residues 267–286 are extracellular; it reads AGKIIEVEDWEIFRKLGLYM. Residues 287–308 traverse the membrane as a helical segment; that stretch reads ATVLTGLAIHSIVILPLIYFIV. Residues 309–313 lie on the Cytoplasmic side of the membrane; that stretch reads VRKNP. The segment at residues 314-344 is an intramembrane region (discontinuously helical); the sequence is FRFAMGMAQALLTALMISSSSATLPVTFRCA. The L-aspartate site is built by S331 and S333. Topologically, residues 345 to 353 are cytoplasmic; that stretch reads EENNQVDKR. Residues 354–380 traverse the membrane as a helical segment; that stretch reads ITRFVLPVGATINMDGTALYEAVAAVF. Na(+)-binding residues include G362, T364, N366, and D368. T370 serves as a coordination point for L-aspartate. The Extracellular portion of the chain corresponds to 381-393; it reads IAQLNDLDLGIGQ. The segment at residues 394–427 is an intramembrane region (discontinuously helical); it reads IITISITATSASIGAAGVPQAGLVTMVIVLSAVG. Residues S405, I406, and A408 each contribute to the Na(+) site. V411 serves as a coordination point for L-aspartate. Residues 428 to 440 lie on the Extracellular side of the membrane; the sequence is LPAEDVTLIIAVD. The helical transmembrane segment at 441-462 threads the bilayer; sequence WLLDRFRTMVNVLGDAFGTGIV. L-aspartate-binding residues include R447, T448, and N451. The Na(+) site is built by N451 and D455. Over 463–524 the chain is Cytoplasmic; the sequence is EKLSKKELEQ…TISFTQTSQF (62 aa). 2 positions are modified to phosphoserine: S517 and S522.

It belongs to the dicarboxylate/amino acid:cation symporter (DAACS) (TC 2.A.23) family. SLC1A1 subfamily. Homotrimer. Interacts with ARL6IP5. Interacts with RTN2 (via N-terminus); the interaction promotes cell surface expression of SLC1A1. Interacts with SORCS2; this interaction is important for normal expression at the cell membrane. Glycosylated. In terms of tissue distribution, expressed in all tissues tested including liver, muscle, testis, ovary, retinoblastoma cell line, neurons and brain (in which there was dense expression in substantia nigra, red nucleus, hippocampus and in cerebral cortical layers).

It is found in the cell membrane. The protein localises to the apical cell membrane. The protein resides in the synapse. It localises to the synaptosome. Its subcellular location is the early endosome membrane. It is found in the late endosome membrane. The protein localises to the recycling endosome membrane. It carries out the reaction K(+)(in) + L-glutamate(out) + 3 Na(+)(out) + H(+)(out) = K(+)(out) + L-glutamate(in) + 3 Na(+)(in) + H(+)(in). The enzyme catalyses K(+)(in) + L-aspartate(out) + 3 Na(+)(out) + H(+)(out) = K(+)(out) + L-aspartate(in) + 3 Na(+)(in) + H(+)(in). The catalysed reaction is D-aspartate(out) + K(+)(in) + 3 Na(+)(out) + H(+)(out) = D-aspartate(in) + K(+)(out) + 3 Na(+)(in) + H(+)(in). It catalyses the reaction K(+)(in) + L-cysteine(out) + 3 Na(+)(out) + H(+)(out) = K(+)(out) + L-cysteine(in) + 3 Na(+)(in) + H(+)(in). In terms of biological role, sodium-dependent, high-affinity amino acid transporter that mediates the uptake of L-glutamate and also L-aspartate and D-aspartate. Can also transport L-cysteine. Functions as a symporter that transports one amino acid molecule together with two or three Na(+) ions and one proton, in parallel with the counter-transport of one K(+) ion. Mediates Cl(-) flux that is not coupled to amino acid transport; this avoids the accumulation of negative charges due to aspartate and Na(+) symport. Plays an important role in L-glutamate and L-aspartate reabsorption in renal tubuli. Plays a redundant role in the rapid removal of released glutamate from the synaptic cleft, which is essential for terminating the postsynaptic action of glutamate. Contributes to glutathione biosynthesis and protection against oxidative stress via its role in L-glutamate and L-cysteine transport. Negatively regulated by ARL6IP5. The polypeptide is Excitatory amino acid transporter 3 (Homo sapiens (Human)).